The chain runs to 447 residues: Cobyrinate a,c-diamide synthase (447 aa).

The 188-residue stretch at 252 to 439 folds into the GATase cobBQ-type domain; it reads KIAVAFDESF…AHQHCIGNPY (188 aa). The active-site Nucleophile is C331.

The protein belongs to the CobB/CbiA family. Mg(2+) serves as cofactor.

It catalyses the reaction cob(II)yrinate + 2 L-glutamine + 2 ATP + 2 H2O = cob(II)yrinate a,c diamide + 2 L-glutamate + 2 ADP + 2 phosphate + 2 H(+). The enzyme catalyses Ni-sirohydrochlorin + 2 L-glutamine + 2 ATP + 2 H2O = Ni-sirohydrochlorin a,c-diamide + 2 L-glutamate + 2 ADP + 2 phosphate + 2 H(+). Its pathway is cofactor biosynthesis; adenosylcobalamin biosynthesis; cob(II)yrinate a,c-diamide from sirohydrochlorin (anaerobic route): step 10/10. In terms of biological role, catalyzes the ATP-dependent amidation of the two carboxylate groups at positions a and c of cobyrinate, using either L-glutamine or ammonia as the nitrogen source. Involved in the biosynthesis of the unique nickel-containing tetrapyrrole coenzyme F430, the prosthetic group of methyl-coenzyme M reductase (MCR), which plays a key role in methanogenesis and anaerobic methane oxidation. Catalyzes the ATP-dependent amidation of the two carboxylate groups at positions a and c of Ni-sirohydrochlorin, using L-glutamine or ammonia as the nitrogen source. This Methanococcus maripaludis (strain C7 / ATCC BAA-1331) protein is Cobyrinate a,c-diamide synthase.